Consider the following 153-residue polypeptide: Peptide methionine sulfoxide reductase B6 (153 aa).

The MsrB domain maps to 28–149 (NEEWRTVLSP…NSVALKFSSA (122 aa)). Zn(2+) contacts are provided by Cys-67, Cys-70, Cys-113, and Cys-116. A disulfide bridge links Cys-85 with Cys-138. Cys-138 (nucleophile) is an active-site residue.

Belongs to the MsrB Met sulfoxide reductase family. Zn(2+) is required as a cofactor.

It is found in the cytoplasm. The protein resides in the cytosol. It catalyses the reaction L-methionyl-[protein] + [thioredoxin]-disulfide + H2O = L-methionyl-(R)-S-oxide-[protein] + [thioredoxin]-dithiol. Its function is as follows. Catalyzes the reduction of methionine sulfoxide (MetSO) to methionine in proteins. Plays a protective role against oxidative stress by restoring activity to proteins that have been inactivated by methionine oxidation. MSRB family specifically reduces the MetSO R-enantiomer. The sequence is that of Peptide methionine sulfoxide reductase B6 (MSRB6) from Arabidopsis thaliana (Mouse-ear cress).